We begin with the raw amino-acid sequence, 122 residues long: Crustacean hyperglycemic hormones 5 (122 aa).

The signal sequence occupies residues M1–A26. Disulfide bonds link C55–C91, C71–C87, and C74–C100. V120 carries the post-translational modification Valine amide.

Belongs to the arthropod CHH/MIH/GIH/VIH hormone family.

It localises to the secreted. Hormone found in the sinus gland of isopods and decapods which controls the blood sugar level. Has a secretagogue action over the amylase released from the midgut gland. May act as a stress hormone and may be involved in the control of molting and reproduction. This is Crustacean hyperglycemic hormones 5 (CHH5) from Penaeus monodon (Giant tiger prawn).